We begin with the raw amino-acid sequence, 475 residues long: Ribulose bisphosphate carboxylase large chain (475 aa).

Positions 123 and 173 each coordinate substrate. Lys-175 (proton acceptor) is an active-site residue. Lys-177 contributes to the substrate binding site. Residues Lys-201, Asp-203, and Glu-204 each contribute to the Mg(2+) site. Lys-201 carries the N6-carboxylysine modification. His-294 functions as the Proton acceptor in the catalytic mechanism. Arg-295, His-327, and Ser-379 together coordinate substrate.

This sequence belongs to the RuBisCO large chain family. Type I subfamily. Heterohexadecamer of 8 large chains and 8 small chains; disulfide-linked. The disulfide link is formed within the large subunit homodimers. Interacts with assembly factor Raf1 which helps form the holoenzyme, most interaction (and folding) occurs in the cytoplasm. It depends on Mg(2+) as a cofactor. Post-translationally, the disulfide bond which can form in the large chain dimeric partners within the hexadecamer appears to be associated with oxidative stress and protein turnover.

It localises to the carboxysome. Its subcellular location is the cytoplasm. The enzyme catalyses 2 (2R)-3-phosphoglycerate + 2 H(+) = D-ribulose 1,5-bisphosphate + CO2 + H2O. It catalyses the reaction D-ribulose 1,5-bisphosphate + O2 = 2-phosphoglycolate + (2R)-3-phosphoglycerate + 2 H(+). Its function is as follows. RuBisCO catalyzes two reactions: the carboxylation of D-ribulose 1,5-bisphosphate, the primary event in carbon dioxide fixation, as well as the oxidative fragmentation of the pentose substrate in the photorespiration process. Both reactions occur simultaneously and in competition at the same active site. The chain is Ribulose bisphosphate carboxylase large chain from Thermosynechococcus vestitus (strain NIES-2133 / IAM M-273 / BP-1).